The chain runs to 519 residues: MTPAPEPQDPPTIHEPVATEQTDDISDWDVESDYEDGYGAPSKSQAQGGASAADRPKINAHARIDDQMTDLARHASKIRLDNLTMQQIFRDKDRTDNATSDQVLDNHTRMIILNMLNRNIISEIYGTISTGKEANVYNAVAYDNNGERIERAVKVYKTIILGFKDRERYLAGEQRFKTIVDKALSAPRKMIKLWAEKEFRNLKRLHTAGIPCPEPIYLKYNVMVMGFLGDHTNGYAFPRLHDTKITGETLEETEAEWRRLYINLLSMMRRMYQVCGLVHGDLSEYNILYNEGVLYIIDVSQSVEHDHIEATNFLRMDIRNVNDFFARRGVDTLSDRTVYHFITDSTGAVDENGMRKAIDNLYATRPPLAESEEARAEQEIDNQVFRNQFIPTTLEEVYNLEVELGKKVDTRLYQHMLADSKVPESTGGEHKSGEGGESGSEDEEGDEGESGEVESGDEEREEGEGDRFEKKRPRGKKHLDKAEKHAHKMAVKEAKREKRKEKMPKHVKKKLVAANKKRK.

Over residues 1–10 (MTPAPEPQDP) the composition is skewed to pro residues. The tract at residues 1–54 (MTPAPEPQDPPTIHEPVATEQTDDISDWDVESDYEDGYGAPSKSQAQGGASAAD) is disordered. Residues 21-36 (QTDDISDWDVESDYED) show a composition bias toward acidic residues. The segment covering 39-53 (GAPSKSQAQGGASAA) has biased composition (low complexity). A Protein kinase domain is found at 122 to 519 (SEIYGTISTG…KLVAANKKRK (398 aa)). The ATP site is built by Lys-154 and Leu-228. Residue Asp-281 is the Proton acceptor of the active site. Mg(2+) is bound by residues Asn-286 and Asp-298. Asp-298 acts as the 4-aspartylphosphate intermediate in catalysis. A disordered region spans residues 418-519 (ADSKVPESTG…KLVAANKKRK (102 aa)). Acidic residues predominate over residues 439 to 464 (GSEDEEGDEGESGEVESGDEEREEGE). Positions 440 to 519 (SEDEEGDEGE…KLVAANKKRK (80 aa)) are association with (pre-)40S ribosomal particle. Basic residues-rich tracts occupy residues 470-489 (KKRP…AHKM) and 497-519 (EKRK…KKRK).

This sequence belongs to the protein kinase superfamily. RIO-type Ser/Thr kinase family. It depends on Mg(2+) as a cofactor. Post-translationally, autophosphorylated.

The protein localises to the cytoplasm. It carries out the reaction L-seryl-[protein] + ATP = O-phospho-L-seryl-[protein] + ADP + H(+). The enzyme catalyses L-threonyl-[protein] + ATP = O-phospho-L-threonyl-[protein] + ADP + H(+). It catalyses the reaction ATP + H2O = ADP + phosphate + H(+). Its function is as follows. Involved in the final steps of cytoplasmic maturation of the 40S ribosomal subunit. In vitro, has strong ATPase activity and only low protein kinase activity. The sequence is that of Serine/threonine-protein kinase RIO1 from Chaetomium thermophilum (strain DSM 1495 / CBS 144.50 / IMI 039719) (Thermochaetoides thermophila).